An 83-amino-acid chain; its full sequence is Small ribosomal subunit protein bS16 (83 aa).

Belongs to the bacterial ribosomal protein bS16 family.

The sequence is that of Small ribosomal subunit protein bS16 from Cupriavidus taiwanensis (strain DSM 17343 / BCRC 17206 / CCUG 44338 / CIP 107171 / LMG 19424 / R1) (Ralstonia taiwanensis (strain LMG 19424)).